The chain runs to 75 residues: Exodeoxyribonuclease 7 small subunit (75 aa).

The protein belongs to the XseB family. As to quaternary structure, heterooligomer composed of large and small subunits.

It localises to the cytoplasm. The enzyme catalyses Exonucleolytic cleavage in either 5'- to 3'- or 3'- to 5'-direction to yield nucleoside 5'-phosphates.. In terms of biological role, bidirectionally degrades single-stranded DNA into large acid-insoluble oligonucleotides, which are then degraded further into small acid-soluble oligonucleotides. This is Exodeoxyribonuclease 7 small subunit from Anaplasma phagocytophilum (strain HZ).